Consider the following 286-residue polypeptide: NADPH-dependent 7-cyano-7-deazaguanine reductase (286 aa).

92 to 94 (IES) provides a ligand contact to substrate. 94 to 95 (SK) is an NADPH binding site. The Thioimide intermediate role is filled by C194. Residue D201 is the Proton donor of the active site. 233–234 (HE) provides a ligand contact to substrate. NADPH is bound at residue 262 to 263 (RG).

The protein belongs to the GTP cyclohydrolase I family. QueF type 2 subfamily. As to quaternary structure, homodimer.

The protein resides in the cytoplasm. It carries out the reaction 7-aminomethyl-7-carbaguanine + 2 NADP(+) = 7-cyano-7-deazaguanine + 2 NADPH + 3 H(+). The protein operates within tRNA modification; tRNA-queuosine biosynthesis. Catalyzes the NADPH-dependent reduction of 7-cyano-7-deazaguanine (preQ0) to 7-aminomethyl-7-deazaguanine (preQ1). The sequence is that of NADPH-dependent 7-cyano-7-deazaguanine reductase from Shewanella sp. (strain MR-7).